We begin with the raw amino-acid sequence, 343 residues long: Uroporphyrinogen decarboxylase (343 aa).

Residues 25-29, Phe-44, Asp-75, Tyr-150, Ser-205, and His-320 each bind substrate; that span reads RQAGR.

This sequence belongs to the uroporphyrinogen decarboxylase family. Homodimer.

The protein localises to the cytoplasm. The catalysed reaction is uroporphyrinogen III + 4 H(+) = coproporphyrinogen III + 4 CO2. It functions in the pathway porphyrin-containing compound metabolism; protoporphyrin-IX biosynthesis; coproporphyrinogen-III from 5-aminolevulinate: step 4/4. In terms of biological role, catalyzes the decarboxylation of four acetate groups of uroporphyrinogen-III to yield coproporphyrinogen-III. This Mesorhizobium japonicum (strain LMG 29417 / CECT 9101 / MAFF 303099) (Mesorhizobium loti (strain MAFF 303099)) protein is Uroporphyrinogen decarboxylase.